We begin with the raw amino-acid sequence, 87 residues long: Large ribosomal subunit protein bL31B-2/bL31B-3 (87 aa).

This sequence belongs to the bacterial ribosomal protein bL31 family. Type B subfamily. As to quaternary structure, part of the 50S ribosomal subunit.

This Escherichia coli O157:H7 protein is Large ribosomal subunit protein bL31B-2/bL31B-3 (rpmE2-2).